A 181-amino-acid chain; its full sequence is Alkyl hydroperoxide reductase AhpD (181 aa).

The Proton donor role is filled by Cys131. Cys131 and Cys134 are joined by a disulfide. Cys134 (cysteine sulfenic acid (-SOH) intermediate) is an active-site residue.

The protein belongs to the AhpD family.

The catalysed reaction is N(6)-[(R)-dihydrolipoyl]-L-lysyl-[lipoyl-carrier protein] + a hydroperoxide = N(6)-[(R)-lipoyl]-L-lysyl-[lipoyl-carrier protein] + an alcohol + H2O. Antioxidant protein with alkyl hydroperoxidase activity. Required for the reduction of the AhpC active site cysteine residues and for the regeneration of the AhpC enzyme activity. This Rhodopseudomonas palustris (strain BisB18) protein is Alkyl hydroperoxide reductase AhpD.